Consider the following 385-residue polypeptide: UPF0284 protein P9301_04631 (385 aa).

Belongs to the UPF0284 family.

The protein is UPF0284 protein P9301_04631 of Prochlorococcus marinus (strain MIT 9301).